Consider the following 60-residue polypeptide: Ribosome biogenesis protein Nop10 (60 aa).

This sequence belongs to the NOP10 family.

Involved in ribosome biogenesis; more specifically in 18S rRNA pseudouridylation and in cleavage of pre-rRNA. This chain is Ribosome biogenesis protein Nop10, found in Haloquadratum walsbyi (strain DSM 16790 / HBSQ001).